We begin with the raw amino-acid sequence, 359 residues long: Phospho-N-acetylmuramoyl-pentapeptide-transferase (359 aa).

Helical transmembrane passes span 27–47, 71–91, 93–113, 134–154, 170–190, 203–223, 234–254, 262–282, 286–306, and 336–356; these read IGAAVCAFLLVLFLGPLFIRT, VPTMGGLLILLSVTVSTLLWA, LDNPLIWLVLLVTLFFGMIGA, LLLQIAGALIVGFFVYLHPGY, LGWFYIVFAVIVIVGASNAVN, MVVSSAVYLLFAYLAGNVVLA, SGELAIFCGTLFGACLGFLWF, FMGDVGSLALGGALGSIAIII, FLLAIVGGVFVMEALSVMLQV, and KVVVRFWIVSIILGLFAIATL.

Belongs to the glycosyltransferase 4 family. MraY subfamily. Requires Mg(2+) as cofactor.

Its subcellular location is the cell inner membrane. The enzyme catalyses UDP-N-acetyl-alpha-D-muramoyl-L-alanyl-gamma-D-glutamyl-meso-2,6-diaminopimeloyl-D-alanyl-D-alanine + di-trans,octa-cis-undecaprenyl phosphate = di-trans,octa-cis-undecaprenyl diphospho-N-acetyl-alpha-D-muramoyl-L-alanyl-D-glutamyl-meso-2,6-diaminopimeloyl-D-alanyl-D-alanine + UMP. It participates in cell wall biogenesis; peptidoglycan biosynthesis. Its function is as follows. Catalyzes the initial step of the lipid cycle reactions in the biosynthesis of the cell wall peptidoglycan: transfers peptidoglycan precursor phospho-MurNAc-pentapeptide from UDP-MurNAc-pentapeptide onto the lipid carrier undecaprenyl phosphate, yielding undecaprenyl-pyrophosphoryl-MurNAc-pentapeptide, known as lipid I. The protein is Phospho-N-acetylmuramoyl-pentapeptide-transferase of Desulfotalea psychrophila (strain LSv54 / DSM 12343).